The following is a 310-amino-acid chain: Putative S-adenosyl-L-methionine-dependent methyltransferase Mvan_1346 (310 aa).

S-adenosyl-L-methionine is bound by residues Asp-136 and 165–166 (DL).

Belongs to the UPF0677 family.

In terms of biological role, exhibits S-adenosyl-L-methionine-dependent methyltransferase activity. The protein is Putative S-adenosyl-L-methionine-dependent methyltransferase Mvan_1346 of Mycolicibacterium vanbaalenii (strain DSM 7251 / JCM 13017 / BCRC 16820 / KCTC 9966 / NRRL B-24157 / PYR-1) (Mycobacterium vanbaalenii).